Consider the following 203-residue polypeptide: Ribosome-binding factor A (203 aa).

Residues 119-141 show a composition bias toward basic and acidic residues; that stretch reads LAEVRRDARPAGDEDPYRRPRTV. Positions 119 to 203 are disordered; the sequence is LAEVRRDARP…SPGGDPTAGR (85 aa). The span at 142-169 shows a compositional bias: acidic residues; it reads DEDDEDEDEDLVDEFDEFDRVEELDADA.

This sequence belongs to the RbfA family. As to quaternary structure, monomer. Binds 30S ribosomal subunits, but not 50S ribosomal subunits or 70S ribosomes.

It is found in the cytoplasm. In terms of biological role, one of several proteins that assist in the late maturation steps of the functional core of the 30S ribosomal subunit. Associates with free 30S ribosomal subunits (but not with 30S subunits that are part of 70S ribosomes or polysomes). Required for efficient processing of 16S rRNA. May interact with the 5'-terminal helix region of 16S rRNA. The polypeptide is Ribosome-binding factor A (Frankia alni (strain DSM 45986 / CECT 9034 / ACN14a)).